Consider the following 111-residue polypeptide: Microtubule nucleation factor SSNA1 (111 aa).

Residues 6-71 (QALQNHNNEL…ARKTETKNEY (66 aa)) adopt a coiled-coil conformation.

It belongs to the SSNA1 family. In terms of assembly, self-assembles into fibrils in a head-to-tail fashion.

Its subcellular location is the cytoplasm. The protein localises to the cytoskeleton. It is found in the flagellum basal body. The protein resides in the flagellum axoneme. Microtubule-binding protein which stabilizes dynamic microtubules by slowing growth and shrinkage at both plus and minus ends and serves as a sensor of microtubule damage. Induces microtubule branching which is mediated by the formation of long SSNA1 fibrils which guide microtubule protofilaments to split apart from the mother microtubule and form daughter microtubules. Required for cell division. The polypeptide is Microtubule nucleation factor SSNA1 (Chlamydomonas reinhardtii (Chlamydomonas smithii)).